A 441-amino-acid chain; its full sequence is Deoxyguanosinetriphosphate triphosphohydrolase-like protein (441 aa).

The region spanning 62–255 is the HD domain; sequence RLTHSLEAAQ…MELADDIAYG (194 aa).

This sequence belongs to the dGTPase family. Type 2 subfamily.

In Vibrio cholerae serotype O1 (strain ATCC 39541 / Classical Ogawa 395 / O395), this protein is Deoxyguanosinetriphosphate triphosphohydrolase-like protein (dgt).